A 141-amino-acid chain; its full sequence is Large ribosomal subunit protein uL14 (141 aa).

This sequence belongs to the universal ribosomal protein uL14 family.

This Tetrahymena thermophila (strain SB210) protein is Large ribosomal subunit protein uL14 (RPL23).